The following is a 99-amino-acid chain: Bacterial microcompartment protein homohexamer (99 aa).

The 85-residue stretch at 4–88 (ALGMIEVRGF…PHVNVDAALP (85 aa)) folds into the BMC domain.

Belongs to the bacterial microcompartments protein family. In terms of assembly, homohexamer with a small central pore. When purified protein is examined by atomic force microscopy it dynamically makes uniform patches about 35 Angstroms thick with hexamers in the same orientation. In the BMC the concave side faces outward, with the N- and C-terminii exposed to the cytoplasm.

The protein resides in the bacterial microcompartment. In terms of biological role, the only hexameric shell protein in this bacterium, it forms the majority of the bacterial microcompartment (BMC) shell. Expression of 5 proteins in E.coli (BMC-H (Hoch_5815), BMC-P (Hoch_5814), and 3 BMC-T (Hoch_5812, Hoch_5816, Hoch_3341)) forms a 40 nm artificial BMC with a molecular mass of 6.5 MDa. There are 60 BMC-H hexamers per BMC. The shell facets are 20-30 Angstroms thick (a single hexamer layer), with 1 of BMC-T trimers protruding to the exterior. The sequence is that of Bacterial microcompartment protein homohexamer from Haliangium ochraceum (strain DSM 14365 / JCM 11303 / SMP-2).